A 320-amino-acid chain; its full sequence is MPRLQQKWLNSRECPTLRGEAAKGLFPTKDDPSAHKRMSPSDKDILILCCKLGIALLCLGLLGEVAVRARRALTLDSFNSSSVQDYNLNDSENSTFLLRQGPQPTSSYKPHQPCPSEIEIRMLAKNYIFTNKTNPIGRLLVTMLRNESLPFSTIFTQIQRLEMGIENRKRHSTSVEEQVQGLRASGLEVKRGKRSALVKIGDRWWQPGTYRGPYIYRPTDAPLPYTGRYDLNFDRWVTVNGYKVLYRSLSFRERLARARPPWCMLTQEEKNDMKQQVHDYIYLGTGMSSIWGKIFHTKERTVAALIEHYSAKTYGMSYYD.

The Cytoplasmic segment spans residues 1-44 (MPRLQQKWLNSRECPTLRGEAAKGLFPTKDDPSAHKRMSPSDKD). The chain crosses the membrane as a helical span at residues 45–65 (ILILCCKLGIALLCLGLLGEV). Topologically, residues 66–319 (AVRARRALTL…SAKTYGMSYY (254 aa)) are extracellular. 5 N-linked (GlcNAc...) asparagine; by host glycosylation sites follow: asparagine 79, asparagine 89, asparagine 93, asparagine 131, and asparagine 146.

The protein belongs to the mouse mammary tumor virus PR73 superantigen family.

It localises to the membrane. In terms of biological role, superantigen. The polypeptide is Protein PR73 (Mouse mammary tumor virus (strain BR6) (MMTV)).